Here is a 617-residue protein sequence, read N- to C-terminus: MDLKTAVFNAARDGKLRLLSKLLENKAKDDVVLLMSEKTNGATPLLMAARYGHLDMVDYLLDQCSASVEIGGSVNFDGETIEGAPPLWAASAAGHLKVVRSLLVHGASVNNTTLTNSTPLRAACFDGHLEIVKYLVEHKADLEVANRHGHTCLMISCYKGHKEIAQFLLEKGADVNRKSVKGNTALHDCAESGSLEIMQMLLKYGARMEKDGYGMTPLLSASVTGHTNIVDFLTQNPQTSKNERINALELLGATFVDKKRDLLGALKYWKRAMDMRHSDRTNIVSKPEPQTLIMAYDYAREVNTAEELDNLIADPDEMRMQALLIRERILGPSHPDTSYYIRYRGAVYADSGNFKRCINLWKYALDMQQNNLDPLSPMTASSLLSFAELFSFMLQDRAKGLLGTTVTFDDLMGILCKSVMEIDRAVKQTAPPPDQVQLNKALSIILHLICLLEKVPCSPDQDHFKKQNIYRFLKLHPKGKNNFSPLHLAVDKNTTCVGRYPVCKFPSFQVTAILLECGADVNVRDAEQNSPLHVAALNNHPDIMNLLVKSGAHFDSTNSHNQTACDLLDEKEMAKNLIQPINHTTLQCLAARVIVKHNIQYKQEIPEKLESFVLLHR.

ANK repeat units lie at residues 2-31, 40-70, 82-111, 115-144, 148-177, 181-210, and 213-242; these read DLKT…KDDV, NGAT…SVEI, EGAP…SVNN, TNST…DLEV, HGHT…DVNR, KGNT…RMEK, and YGMT…TSKN. TPR repeat units follow at residues 245 to 279 and 338 to 371; these read INAL…RHSD and SYYI…QQNN. 2 ANK repeats span residues 481-523 and 527-556; these read NNFS…DVNV and EQNS…HFDS.

This sequence belongs to the fem-1 family. As to quaternary structure, component of a CRL2 E3 ubiquitin-protein ligase complex, also named ECS (Elongin BC-CUL2/5-SOCS-box protein) complex.

It participates in protein modification; protein ubiquitination. Substrate-recognition component of a Cul2-RING (CRL2) E3 ubiquitin-protein ligase complex of the DesCEND (destruction via C-end degrons) pathway, which recognizes a C-degron located at the extreme C terminus of target proteins, leading to their ubiquitination and degradation. The C-degron recognized by the DesCEND pathway is usually a motif of less than ten residues and can be present in full-length proteins, truncated proteins or proteolytically cleaved forms. The CRL2(FEM1C) complex specifically recognizes proteins with an arginine at the C-terminus: recognizes and binds proteins ending with -Lys/Arg-Xaa-Arg and -Lys/Arg-Xaa-Xaa-Arg C-degrons, leading to their ubiquitination and degradation. In Xenopus laevis (African clawed frog), this protein is Protein fem-1 homolog C.